Consider the following 457-residue polypeptide: Metal tolerance protein C4 (457 aa).

Over 1-115 the chain is Cytoplasmic; it reads MQSSHRILSR…IEINDQHSQR (115 aa). The helical transmembrane segment at 116 to 136 threads the bilayer; sequence AVTTALWCNFLVFSLKFGVWW. At 137–141 the chain is on the vacuolar side; sequence TSSSH. Residues 142–162 traverse the membrane as a helical segment; that stretch reads VIMAEVVHSVADFANQALLAY. Residues 163–183 are Cytoplasmic-facing; that stretch reads GLSSSRRAPDALHPYGYSKER. The helical transmembrane segment at 184–204 threads the bilayer; it reads FVWSLISAVGIFCLGSGATIV. The Vacuolar segment spans residues 205–220; the sequence is NGVQNLWTSSPPPNME. The helical transmembrane segment at 221–241 threads the bilayer; it reads LAAVVIGGSFLIEGASLLVAI. The Cytoplasmic segment spans residues 242-267; the sequence is QSVKKGAAQEGMTIRDYIWRGHDPTS. The chain crosses the membrane as a helical span at residues 268-288; the sequence is VAVMTEDGAAVAGLAIAAASL. Residues 289–297 lie on the Vacuolar side of the membrane; that stretch reads VAVRMTGNP. Residues 298–318 form a helical membrane-spanning segment; sequence IYDPIGSIVVGNLLGMVAIFL. At 319–457 the chain is on the cytoplasmic side; it reads IQRNRHALIG…HNPTPTDPSL (139 aa).

It belongs to the cation diffusion facilitator (CDF) transporter (TC 2.A.4) family.

It localises to the vacuole membrane. Its function is as follows. Involved in sequestration of excess metal in the cytoplasm into vacuoles to maintain metal homeostasis. The chain is Metal tolerance protein C4 (MTPC4) from Arabidopsis thaliana (Mouse-ear cress).